Here is a 588-residue protein sequence, read N- to C-terminus: Aspartate--tRNA ligase (588 aa).

E177 contacts L-aspartate. Residues 201 to 204 (QLFK) form an aspartate region. Residue R223 coordinates L-aspartate. Residues 223–225 (RDE) and Q232 contribute to the ATP site. H451 provides a ligand contact to L-aspartate. E485 is a binding site for ATP. R492 contacts L-aspartate. Residue 537 to 540 (GLDR) coordinates ATP.

The protein belongs to the class-II aminoacyl-tRNA synthetase family. Type 1 subfamily. As to quaternary structure, homodimer.

It localises to the cytoplasm. It catalyses the reaction tRNA(Asp) + L-aspartate + ATP = L-aspartyl-tRNA(Asp) + AMP + diphosphate. Its function is as follows. Catalyzes the attachment of L-aspartate to tRNA(Asp) in a two-step reaction: L-aspartate is first activated by ATP to form Asp-AMP and then transferred to the acceptor end of tRNA(Asp). This chain is Aspartate--tRNA ligase, found in Staphylococcus carnosus (strain TM300).